Here is a 394-residue protein sequence, read N- to C-terminus: Ribulose bisphosphate carboxylase large chain (394 aa).

Residue Lys-5 is modified to N6,N6,N6-trimethyllysine. Residues Asn-114 and Thr-164 each contribute to the substrate site. The active-site Proton acceptor is the Lys-166. Lys-168 serves as a coordination point for substrate. Mg(2+) is bound by residues Lys-192, Asp-194, and Glu-195. Lys-192 carries the N6-carboxylysine modification. His-285 serves as the catalytic Proton acceptor. Residues Arg-286, His-318, and Ser-370 each coordinate substrate.

This sequence belongs to the RuBisCO large chain family. Type I subfamily. In terms of assembly, heterohexadecamer of 8 large chains and 8 small chains. Mg(2+) serves as cofactor.

Its subcellular location is the plastid. The protein resides in the chloroplast. It catalyses the reaction 2 (2R)-3-phosphoglycerate + 2 H(+) = D-ribulose 1,5-bisphosphate + CO2 + H2O. The catalysed reaction is D-ribulose 1,5-bisphosphate + O2 = 2-phosphoglycolate + (2R)-3-phosphoglycerate + 2 H(+). In terms of biological role, ruBisCO catalyzes two reactions: the carboxylation of D-ribulose 1,5-bisphosphate, the primary event in carbon dioxide fixation, as well as the oxidative fragmentation of the pentose substrate in the photorespiration process. Both reactions occur simultaneously and in competition at the same active site. In Barclaya longifolia (Orchid lily), this protein is Ribulose bisphosphate carboxylase large chain (rbcL).